We begin with the raw amino-acid sequence, 119 residues long: Protein yippee-like 3 (119 aa).

Positions 19–116 (RRYSCAHCRA…IELNHMIKDN (98 aa)) constitute a Yippee domain. Cys23, Cys26, Cys79, and Cys82 together coordinate Zn(2+).

Belongs to the yippee family. In terms of processing, probably ubiquitinated leading to its degradation by the proteasome.

The protein resides in the nucleus. It localises to the nucleolus. Its function is as follows. Involved in proliferation and apoptosis in myeloid precursor cells. This Bos taurus (Bovine) protein is Protein yippee-like 3 (YPEL3).